Reading from the N-terminus, the 230-residue chain is Protein LURP-one-related 11 (230 aa).

This sequence belongs to the LOR family.

In terms of biological role, might be related to the phospholipid scramblase and tubby-like superfamily of membrane tethered transcription factors. The sequence is that of Protein LURP-one-related 11 from Arabidopsis thaliana (Mouse-ear cress).